Reading from the N-terminus, the 407-residue chain is Phosphonoacetate hydrolase (407 aa).

Positions 25, 64, 202, 206, 241, 242, and 368 each coordinate Zn(2+). Substrate is bound by residues Thr64 and Asp202. The substrate site is built by His242 and His368.

This sequence belongs to the alkaline phosphatase family. PhnA subfamily. As to quaternary structure, homodimer. Requires Zn(2+) as cofactor.

The catalysed reaction is phosphonoacetate + H2O = acetate + phosphate + H(+). Its activity is regulated as follows. Completely inhibited by EDTA and 1,10-phenanthroline. Moderately inhibited by the phosphonocarboxylic acids phosphonoformate and 3-phosphonopropionate and the phosphonate herbicide glyphosate. Partially inhibited by the reducing agents sodium sulfide and dithiotheitol and the chelating agent iminodiacetate. Nonphosphonate analogs of phosphonoacetate, such as arsonoacetate, sulfonoacetate and malonate are poor inhibitors. Inorganic phosphate, acetate and the known phosphonotase inhibitor phosphite have little effect on activity. Not inhibited by the alkylphosphonic acids methylphosphonate and ethylphosphonate, or the aminoalkylphosphonates 2-aminoethylphosphonate, 3-aminopropylphosphonate and 4-aminobutylphosphonate. Fe(3+), Ca(2+), Mg(2+) and Cs(+) have no effect on activity. Activity is slightly increased by the aminoalkylphosphonates 1-aminoethylphosphonate, 1-aminobutylphosphonate, 2-amino-4-butylphosphonate. Activity is increased by Zn(2+), Mn(2+) and Co(2+), these 3 metal ions also allow recovery of activity after EDTA treatment. In terms of biological role, specifically hydrolyzes phosphonoacetate. Does not have activity on other organophosphonates or acetates. This chain is Phosphonoacetate hydrolase, found in Pseudomonas fluorescens.